Here is a 551-residue protein sequence, read N- to C-terminus: Probable 4-coumarate--CoA ligase 3 (551 aa).

S205, S206, G207, T208, T209, and K213 together coordinate ATP. F253 is a (E)-4-coumaroyl-AMP binding site. K274 lines the CoA pocket. Residues 276–346 (EPVRFLELIK…RFKGRLVIKQ (71 aa)) form an SBD1 region. Positions 323, 346, 347, and 351 each coordinate (E)-4-coumaroyl-AMP. The ATP site is built by Q346, G347, T351, D430, and R445. The interval 347–409 (GYGATELSPC…IKGPNVMLGY (63 aa)) is SBD2. Residues K447 and K451 each contribute to the (E)-4-coumaroyl-AMP site. Residues K453 and G454 each contribute to the CoA site. K537 contacts ATP.

It belongs to the ATP-dependent AMP-binding enzyme family. The cofactor is Mg(2+).

The catalysed reaction is (E)-4-coumarate + ATP + CoA = (E)-4-coumaroyl-CoA + AMP + diphosphate. It catalyses the reaction (E)-4-coumarate + ATP + H(+) = (E)-4-coumaroyl-AMP + diphosphate. It carries out the reaction (E)-4-coumaroyl-AMP + CoA = (E)-4-coumaroyl-CoA + AMP + H(+). Its pathway is phytoalexin biosynthesis; 3,4',5-trihydroxystilbene biosynthesis; 3,4',5-trihydroxystilbene from trans-4-coumarate: step 1/2. Functionally, carboxylate--CoA ligase that may use 4-coumarate as substrate. Follows a two-step reaction mechanism, wherein the carboxylate substrate first undergoes adenylation by ATP, followed by a thioesterification in the presence of CoA to yield the final CoA thioester. This is Probable 4-coumarate--CoA ligase 3 (4cl3) from Dictyostelium discoideum (Social amoeba).